The primary structure comprises 363 residues: uncharacterized protein (363 aa).

The first 20 residues, 1–20 (MKRAPLITGLLLISTSCAYA), serve as a signal peptide directing secretion.

The protein belongs to the fimbrial protein family.

The protein resides in the fimbrium. Functionally, part of the yraHIJK fimbrial operon. Could contribute to adhesion to various surfaces in specific environmental niches. Increases adhesion to eukaryotic T24 bladder epithelial cells in the absence of fim operon. This is an uncharacterized protein from Escherichia coli (strain K12).